A 308-amino-acid chain; its full sequence is tRNA dimethylallyltransferase 2 (308 aa).

13–20 provides a ligand contact to ATP; sequence GPTASGKT. Residue 15 to 20 coordinates substrate; sequence TASGKT. Residues 38 to 41 form an interaction with substrate tRNA region; sequence DSRQ.

It belongs to the IPP transferase family. Monomer. The cofactor is Mg(2+).

The catalysed reaction is adenosine(37) in tRNA + dimethylallyl diphosphate = N(6)-dimethylallyladenosine(37) in tRNA + diphosphate. In terms of biological role, catalyzes the transfer of a dimethylallyl group onto the adenine at position 37 in tRNAs that read codons beginning with uridine, leading to the formation of N6-(dimethylallyl)adenosine (i(6)A). In Bacteroides fragilis (strain YCH46), this protein is tRNA dimethylallyltransferase 2.